The primary structure comprises 906 residues: Coatomer subunit beta' (906 aa).

WD repeat units follow at residues 13–52, 55–94, 97–136, 140–180, 183–224, 227–266, 350–388, and 390–425; these read ARSD…LVKT, VCDL…RVHM, AHSD…SCSQ, GHTH…PNFT, GHEK…CVQT, GHAQ…LEST, SCEI…NKSF, and SAQE…KSFK. Position 627 is an N6-acetyllysine (lysine 627). One copy of the WD 9 repeat lies at 746-783; sequence IRTGRLPEAAFLARTYLPSQVSRVVKLWRENLSKVNQK. The segment at 837–872 is disordered; it reads EEAKGFQPSRSAAQQELDGKPASPTPVIVTSQTANK. At serine 859 the chain carries Phosphoserine. Threonine 861 bears the Phosphothreonine mark. The stretch at 866-891 forms a coiled coil; sequence TSQTANKEEKSLLELEVDLDNLEIED.

The protein belongs to the WD repeat COPB2 family. Oligomeric complex that consists of at least the alpha, beta, beta', gamma, delta, epsilon and zeta subunits. Probably interacts with PEX11A. Interacts with SCYL1. Interacts with JAGN1.

The protein localises to the cytoplasm. Its subcellular location is the cytosol. The protein resides in the golgi apparatus membrane. It localises to the cytoplasmic vesicle. It is found in the COPI-coated vesicle membrane. Functionally, the coatomer is a cytosolic protein complex that binds to dilysine motifs and reversibly associates with Golgi non-clathrin-coated vesicles, which further mediate biosynthetic protein transport from the ER, via the Golgi up to the trans Golgi network. Coatomer complex is required for budding from Golgi membranes, and is essential for the retrograde Golgi-to-ER transport of dilysine-tagged proteins. In mammals, the coatomer can only be recruited by membranes associated to ADP-ribosylation factors (ARFs), which are small GTP-binding proteins; the complex also influences the Golgi structural integrity, as well as the processing, activity, and endocytic recycling of LDL receptors. This coatomer complex protein, essential for Golgi budding and vesicular trafficking, is a selective binding protein (RACK) for protein kinase C, epsilon type. It binds to Golgi membranes in a GTP-dependent manner. This chain is Coatomer subunit beta' (COPB2), found in Bos taurus (Bovine).